Here is a 321-residue protein sequence, read N- to C-terminus: Torsin-2A (321 aa).

Residues 1-27 (MAVARHGCPPWGSILGLLVLALAAAAA) form the signal peptide. 93 to 100 (GWTGTGKS) is an ATP binding site. Residue asparagine 149 is glycosylated (N-linked (GlcNAc...) asparagine).

The protein belongs to the ClpA/ClpB family. Torsin subfamily. Homohexamer. Interacts with TOR1AIP1.

It is found in the endoplasmic reticulum lumen. This chain is Torsin-2A (Tor2a), found in Rattus norvegicus (Rat).